A 358-amino-acid chain; its full sequence is MQEWFQNLFAATLGLGDLGITVGLVVSVIVKIVIILIPLILTVAYLTYFERKVIGFMQLRVGPNVTGPWGLIQPFADVFKLLFKEVTRPRLSNKALFYIGPIMSLAPSFAAWAVIPFNEEWVLTNINIGLLYILMITSLSVYGVIIAGWASNSKYSFLGAMRASAQSISYEIAMSAALVCVVMVSGSMNFSDIVAAQAKGIAGGSVFSWNWLPLFPIFIVYLISAVAETNRAPFDVAEGESEIVAGHHVEYSGFAFALFFLAEYIFMILISALTSLMFLGGWLSPFPQSWGFIGTPSAFWMFVKMAAVLYWYLWIRATFPRYRYDQIMRLGWKVLIPIGFAYIVVLGVWMISPLNLWK.

The next 8 helical transmembrane spans lie at 20–40 (ITVGLVVSVIVKIVIILIPLI), 95–115 (ALFYIGPIMSLAPSFAAWAVI), 128–148 (IGLLYILMITSLSVYGVIIAG), 168–188 (ISYEIAMSAALVCVVMVSGSM), 206–226 (VFSWNWLPLFPIFIVYLISAV), 253–273 (GFAFALFFLAEYIFMILISAL), 290–310 (WGFIGTPSAFWMFVKMAAVLY), and 334–354 (VLIPIGFAYIVVLGVWMISPL).

It belongs to the complex I subunit 1 family. In terms of assembly, NDH-1 is composed of 14 different subunits. Subunits NuoA, H, J, K, L, M, N constitute the membrane sector of the complex.

The protein resides in the cell inner membrane. It carries out the reaction a quinone + NADH + 5 H(+)(in) = a quinol + NAD(+) + 4 H(+)(out). NDH-1 shuttles electrons from NADH, via FMN and iron-sulfur (Fe-S) centers, to quinones in the respiratory chain. The immediate electron acceptor for the enzyme in this species is believed to be ubiquinone. Couples the redox reaction to proton translocation (for every two electrons transferred, four hydrogen ions are translocated across the cytoplasmic membrane), and thus conserves the redox energy in a proton gradient. This subunit may bind ubiquinone. This Neisseria meningitidis serogroup C (strain 053442) protein is NADH-quinone oxidoreductase subunit H.